Consider the following 341-residue polypeptide: MDHAGDAMRTDLMTITRYVLNEQSKRPESRGDFTILLSHIVLGCKFVCSAVNKAGLAKLIGLAGETNIQGEEQKKLDVLSNEVFVKALTSSGRTCILVSEEDEEATFIEPSLRGKYCVVFDPLDGSFNIDCGVSIGTIFGIYMVKDFETATLEDVLQPGKNMVAAGYCMYGSSCTLVLSTGSGVNGFTLDPSLGEYILTHPDIKIPNKGKIYSVNEGNAKNWDGPTTKYVEKCKFPTDGSSPKSLRYIESMVANVHRTLLYGGIFLYPGDKKSPNGKLRVLYEVFPMSFLMEQAGGQAFTGKQRALDLIPTKIHERSPVFLGSYDDVEDIKALYAAQEKTA.

The Mg(2+) site is built by Glu-71, Glu-100, Asp-121, Leu-123, and Asp-124. Substrate contacts are provided by residues 124 to 127 (DGSF), Asn-215, Tyr-247, Tyr-267, and Lys-277. Glu-283 contacts Mg(2+).

Belongs to the FBPase class 1 family. It depends on Mg(2+) as a cofactor.

It is found in the cytoplasm. It carries out the reaction beta-D-fructose 1,6-bisphosphate + H2O = beta-D-fructose 6-phosphate + phosphate. This chain is Fructose-1,6-bisphosphatase, cytosolic, found in Pisum sativum (Garden pea).